A 552-amino-acid polypeptide reads, in one-letter code: Low-affinity Fe(2+) transport protein (552 aa).

Over methionine 1 to glutamine 97 the chain is Extracellular. Lysine 39 is covalently cross-linked (Glycyl lysine isopeptide (Lys-Gly) (interchain with G-Cter in ubiquitin)). Phosphoserine is present on residues serine 48 and serine 50. Residues alanine 98–asparagine 118 form a helical membrane-spanning segment. At alanine 119–serine 225 the chain is on the cytoplasmic side. Residues isoleucine 226–proline 246 traverse the membrane as a helical segment. Topologically, residues lysine 247 to aspartate 271 are extracellular. The chain crosses the membrane as a helical span at residues alanine 272–leucine 292. Residues glutamine 293–aspartate 354 are Cytoplasmic-facing. The helical transmembrane segment at isoleucine 355–isoleucine 375 threads the bilayer. At glycine 376–aspartate 383 the chain is on the extracellular side. The chain crosses the membrane as a helical span at residues asparagine 384–leucine 404. The Cytoplasmic portion of the chain corresponds to arginine 405 to threonine 465. The helical transmembrane segment at proline 466–leucine 486 threads the bilayer. Residues arginine 487–glutamine 493 are Extracellular-facing. Residues leucine 494 to alanine 514 form a helical membrane-spanning segment. The Cytoplasmic segment spans residues histidine 515–lysine 552.

It belongs to the FET4 family.

The protein resides in the membrane. In terms of biological role, required for Fe(2+) ion low affinity uptake. This is Low-affinity Fe(2+) transport protein (FET4) from Saccharomyces cerevisiae (strain ATCC 204508 / S288c) (Baker's yeast).